A 558-amino-acid chain; its full sequence is Formate--tetrahydrofolate ligase (558 aa).

66–73 lines the ATP pocket; sequence TPAGEGKT.

This sequence belongs to the formate--tetrahydrofolate ligase family.

The catalysed reaction is (6S)-5,6,7,8-tetrahydrofolate + formate + ATP = (6R)-10-formyltetrahydrofolate + ADP + phosphate. It participates in one-carbon metabolism; tetrahydrofolate interconversion. The polypeptide is Formate--tetrahydrofolate ligase (Neisseria gonorrhoeae (strain NCCP11945)).